The following is a 239-amino-acid chain: 3,4-dihydroxyphthalate decarboxylase (239 aa).

The active-site Proton donor/acceptor is Glu84. The a divalent metal cation site is built by Glu84, His103, His105, and His171.

It belongs to the aldolase class II family. A divalent metal cation serves as cofactor.

The catalysed reaction is 3,4-dihydroxyphthalate + H(+) = 3,4-dihydroxybenzoate + CO2. It participates in xenobiotic degradation; phthalate degradation. Its function is as follows. Catalyzes the decarboxylation of 3,4-dihydroxyphthalate to protocatechuate (3,4-dihydroxybenzoate) during phthalate metabolism. In Terrabacter sp. (strain DBF63), this protein is 3,4-dihydroxyphthalate decarboxylase.